The following is a 171-amino-acid chain: MKLNEISDNNGARKGRMRVGRGIGSGKGKTAGRGQKGAKARSGVSINGFEGGQMPLHMRLPKRGFNNIFAKDYAEVNLGMVQRVIDAGKLDISGTVDHAALKAAGLARGGKDGVRLLAKGELTSKVAFKVAGASKGAFAAVEKAGGSIALPEAQPSEQEKKAARREANKAK.

Over residues methionine 1–asparagine 10 the composition is skewed to polar residues. Disordered stretches follow at residues methionine 1 to valine 44 and leucine 150 to lysine 171. The segment covering arginine 21 to glutamine 35 has biased composition (gly residues). Residues glutamate 157–lysine 171 are compositionally biased toward basic and acidic residues.

The protein belongs to the universal ribosomal protein uL15 family. In terms of assembly, part of the 50S ribosomal subunit.

Functionally, binds to the 23S rRNA. The protein is Large ribosomal subunit protein uL15 of Novosphingobium aromaticivorans (strain ATCC 700278 / DSM 12444 / CCUG 56034 / CIP 105152 / NBRC 16084 / F199).